Reading from the N-terminus, the 265-residue chain is Phosphatidylserine decarboxylase proenzyme (265 aa).

S183 (schiff-base intermediate with substrate; via pyruvic acid) is an active-site residue. S183 is modified (pyruvic acid (Ser); by autocatalysis). The interval 218-242 (PQIESEPESEPALQTAPVETAANPS) is disordered.

The protein belongs to the phosphatidylserine decarboxylase family. PSD-A subfamily. Heterodimer of a large membrane-associated beta subunit and a small pyruvoyl-containing alpha subunit. It depends on pyruvate as a cofactor. Post-translationally, is synthesized initially as an inactive proenzyme. Formation of the active enzyme involves a self-maturation process in which the active site pyruvoyl group is generated from an internal serine residue via an autocatalytic post-translational modification. Two non-identical subunits are generated from the proenzyme in this reaction, and the pyruvate is formed at the N-terminus of the alpha chain, which is derived from the carboxyl end of the proenzyme. The post-translation cleavage follows an unusual pathway, termed non-hydrolytic serinolysis, in which the side chain hydroxyl group of the serine supplies its oxygen atom to form the C-terminus of the beta chain, while the remainder of the serine residue undergoes an oxidative deamination to produce ammonia and the pyruvoyl prosthetic group on the alpha chain.

It is found in the cell membrane. It carries out the reaction a 1,2-diacyl-sn-glycero-3-phospho-L-serine + H(+) = a 1,2-diacyl-sn-glycero-3-phosphoethanolamine + CO2. The protein operates within phospholipid metabolism; phosphatidylethanolamine biosynthesis; phosphatidylethanolamine from CDP-diacylglycerol: step 2/2. Catalyzes the formation of phosphatidylethanolamine (PtdEtn) from phosphatidylserine (PtdSer). This chain is Phosphatidylserine decarboxylase proenzyme, found in Neisseria meningitidis serogroup C (strain 053442).